The sequence spans 231 residues: ATP phosphoribosyltransferase (231 aa).

It belongs to the ATP phosphoribosyltransferase family. Short subfamily. Heteromultimer composed of HisG and HisZ subunits.

It localises to the cytoplasm. The catalysed reaction is 1-(5-phospho-beta-D-ribosyl)-ATP + diphosphate = 5-phospho-alpha-D-ribose 1-diphosphate + ATP. Its pathway is amino-acid biosynthesis; L-histidine biosynthesis; L-histidine from 5-phospho-alpha-D-ribose 1-diphosphate: step 1/9. Functionally, catalyzes the condensation of ATP and 5-phosphoribose 1-diphosphate to form N'-(5'-phosphoribosyl)-ATP (PR-ATP). Has a crucial role in the pathway because the rate of histidine biosynthesis seems to be controlled primarily by regulation of HisG enzymatic activity. The protein is ATP phosphoribosyltransferase of Brucella anthropi (strain ATCC 49188 / DSM 6882 / CCUG 24695 / JCM 21032 / LMG 3331 / NBRC 15819 / NCTC 12168 / Alc 37) (Ochrobactrum anthropi).